Reading from the N-terminus, the 691-residue chain is Elongation factor G (691 aa).

Residues 8-283 (EDYRNFGIMA…AVVDYLPSPI (276 aa)) form the tr-type G domain. Residues 17 to 24 (AHIDAGKT), 81 to 85 (DTPGH), and 135 to 138 (NKMD) each bind GTP.

This sequence belongs to the TRAFAC class translation factor GTPase superfamily. Classic translation factor GTPase family. EF-G/EF-2 subfamily.

The protein localises to the cytoplasm. Its function is as follows. Catalyzes the GTP-dependent ribosomal translocation step during translation elongation. During this step, the ribosome changes from the pre-translocational (PRE) to the post-translocational (POST) state as the newly formed A-site-bound peptidyl-tRNA and P-site-bound deacylated tRNA move to the P and E sites, respectively. Catalyzes the coordinated movement of the two tRNA molecules, the mRNA and conformational changes in the ribosome. The polypeptide is Elongation factor G (Methylocella silvestris (strain DSM 15510 / CIP 108128 / LMG 27833 / NCIMB 13906 / BL2)).